The following is a 377-amino-acid chain: Mucin-7 (377 aa).

The signal sequence occupies residues 1–22; sequence MKTLPLFVCICALSACFSFSEG. Residues 70–100 form a disordered region; sequence CRPKLPPSPNNPPKFPNPHQPPKHPDKNSSV. Pro residues predominate over residues 73–89; that stretch reads KLPPSPNNPPKFPNPHQ. 4 N-linked (GlcNAc...) asparagine glycosylation sites follow: asparagine 97, asparagine 128, asparagine 135, and asparagine 146. The interval 150-355 is disordered; sequence SVATLAPVNS…QPTSAPGQNK (206 aa). Repeat copies occupy residues 165–187, 188–210, 211–233, 234–256, 257–279, and 280–302. Pro residues predominate over residues 169 to 183; it reads PPTPSATTPAPPSSS. The O-linked (GalNAc) threonine; by GALNT13 glycan is linked to threonine 176. Serine 182 and serine 183 each carry an O-linked (GalNAc) serine; by GALNT13 glycan. The span at 184-214 shows a compositional bias: low complexity; that stretch reads APPETTAAPPTPSATTQAPPSSSAPPETTAA. O-linked (GalNAc) threonine; by GALNT13 glycans are attached at residues threonine 188 and threonine 189. A compositionally biased stretch (pro residues) spans 215-229; that stretch reads PPTPPATTPAPPSSS. The segment covering 230 to 283 has biased composition (low complexity); the sequence is APPETTAAPPTPSATTPAPLSSSAPPETTAVPPTPSATTLDPSSASAPPETTAA. A compositionally biased stretch (pro residues) spans 284-298; that stretch reads PPTPSATTPAPPSSP. The segment covering 309–329 has biased composition (polar residues); the sequence is TTPNSSPTTLAPDTSETSAAP. Low complexity predominate over residues 330 to 348; that stretch reads THQTTTSVTTQTTTTKQPT.

Monomer. N- and O-glycosylated. Contains fucose, mannose, galactose, N-acetylglucosamine and N-acetylgalactosamine. Expressed in salivary gland tissues and only in those that contain mucous acinar cells (e.g. sublingual and submandibular glands) and not in salivary glands containing only serous acinar cells (e.g. parotid gland).

It is found in the secreted. In terms of biological role, may function in a protective capacity by promoting the clearance of bacteria in the oral cavity and aiding in mastication, speech, and swallowing. Binds P.aeruginosa pili. The chain is Mucin-7 (MUC7) from Homo sapiens (Human).